A 308-amino-acid polypeptide reads, in one-letter code: Putative proline iminopeptidase (308 aa).

One can recognise an AB hydrolase-1 domain in the interval 30–290 (KPVLYIHGGP…LYVTNNAGHS (261 aa)). Catalysis depends on serine 105, which acts as the Nucleophile. Aspartate 261 is an active-site residue. The Proton donor role is filled by histidine 289.

It belongs to the peptidase S33 family.

It is found in the cytoplasm. It catalyses the reaction Release of N-terminal proline from a peptide.. In terms of biological role, specifically catalyzes the removal of N-terminal proline residues from peptides. In Mycoplasma genitalium (strain ATCC 33530 / DSM 19775 / NCTC 10195 / G37) (Mycoplasmoides genitalium), this protein is Putative proline iminopeptidase (pip).